Consider the following 772-residue polypeptide: MQHTGNCETLIVNSCFGSTCARSIPVFIDSCDLTAEVSRDEETRLARSVPVVLEKIESIIEKIFQTSGPNIVHDKDRAKIALCRLLLGPVAVPCFCEEWDTNDYLSKSGCKCLGPILYIHTSRCRCSDIPVFKFSIMKDYYASHVFRGLLSLKEWNTHLPNVLCTCELSMSDRYVATVFPKQNSIYLEYYPYFLCYLCRYLTVIEIEQCTNDLISLLGPKVAQRVIIHFKLLFGFRHKPHMGTVDSWFWENFFMLELHKLWLTVVKHNRVTTDFFNVVYEKIQNYKQYAIKTLRMSSKAVPAIQRFCLAKFKQQLLYLNIKVTVKKNKRELCLNGFVYGKTLYVVESSQLIFRNLLLLYYDYSLPDECKTKEENVLTTHYIRVISRLSFKQSRSAVPPGVKPDFTFVAQLPKRKELPNVPGGIDFAEITSVRHGAVILNAFNTNKVMNLKATISKRANFVYHRIPKTMTHSFVMYKHTFKEPAFTVSTFVSNDDLDMSSLNINIRGPYCDFLYALGVYKMHVSIQDLFLPAFVCNSNNSVDLQGLEDQDVVRNRKKKVYWITNFPCMISNANKVNVGWFKAGTGIIPRVSGKDLQNVLLQELNNVREIPGLVFDMDLHQLLVLLEQRNLHQIPFLVKQFLIFLRLGLLMGYGNSRRNKVHDIMLHLISNGLFDFNKNSVANTKIKHGCALVGTRLANNVPKIIARQKKMKLDHMGRNANSLAVLRFIVKSGEHKNKTVFIKLLEYLAETSTAINTRNEVARLLLTLTTNMKT.

It belongs to the herpesviridae UL87 family.

The sequence is that of Protein U58 (U58) from Human herpesvirus 6B (strain Z29) (HHV-6 variant B).